The chain runs to 1617 residues: ATP-binding cassette sub-family A member 6 (1617 aa).

The helical transmembrane segment at 31–51 (LLEWGLSILLGLCIALFSSSM) threads the bilayer. N84 and N109 each carry an N-linked (GlcNAc...) asparagine glycan. The next 6 membrane-spanning stretches (helical) occupy residues 222-242 (MFIL…SLNV), 268-288 (GLIY…IITF), 297-317 (FMVI…LVFL), 327-347 (LTNL…FTVF), 355-375 (LEWI…IQII), and 397-417 (IATF…ALYF). Residues 478–713 (IRIRNVKKEY…WGLGYHLSLH (236 aa)) enclose the ABC transporter 1 domain. 514 to 521 (GHSGAGKS) lines the ATP pocket. The chain crosses the membrane as a helical span at residues 854–874 (VLLTLLLVFGIAIFPLIVENI). N940 carries N-linked (GlcNAc...) asparagine glycosylation. The next 6 membrane-spanning stretches (helical) occupy residues 1007 to 1027 (IGLW…LCSI), 1062 to 1082 (ALVD…IFYI), 1094 to 1114 (IVFA…FFIY), 1127 to 1147 (SGLW…ITLI), 1150 to 1170 (FDLS…LLGF), and 1194 to 1214 (ATDF…VFVL). Residues 1288–1513 (GQKKSCFSKR…LGKDYILELK (226 aa)) enclose the ABC transporter 2 domain. 1320–1327 (GPNGAGKS) provides a ligand contact to ATP.

Belongs to the ABC transporter superfamily. ABCA family. In terms of tissue distribution, widely expressed with higher expression in liver.

Its subcellular location is the golgi apparatus membrane. Probable transporter which may play a role in macrophage lipid transport and homeostasis. This chain is ATP-binding cassette sub-family A member 6 (ABCA6), found in Homo sapiens (Human).